The following is a 393-amino-acid chain: BEN domain-containing protein 5 (393 aa).

Positions 169–212 form a coiled coil; that stretch reads RVLYEELLRSYQQQQQEMKHIQHELERTRKQLVQQAKKLKDYGS. In terms of domain architecture, BEN spans 274–380; the sequence is GSGVWVNEEK…EKIMDINKSC (107 aa).

Its function is as follows. May act as a transcriptional repressor. This Xenopus laevis (African clawed frog) protein is BEN domain-containing protein 5 (bend5).